A 226-amino-acid polypeptide reads, in one-letter code: Ribonuclease 3 (226 aa).

Positions 6-128 (INKLQRKLGY…LIGGVFLDSD (123 aa)) constitute an RNase III domain. Glu-41 serves as a coordination point for Mg(2+). Asp-45 is an active-site residue. Residues Asp-114 and Glu-117 each contribute to the Mg(2+) site. The active site involves Glu-117. Residues 155 to 225 (DPKTRLQEYL…AEQALIKLGL (71 aa)) enclose the DRBM domain.

Belongs to the ribonuclease III family. As to quaternary structure, homodimer. Mg(2+) serves as cofactor.

The protein resides in the cytoplasm. The enzyme catalyses Endonucleolytic cleavage to 5'-phosphomonoester.. Its function is as follows. Digests double-stranded RNA. Involved in the processing of primary rRNA transcript to yield the immediate precursors to the large and small rRNAs (23S and 16S). Processes some mRNAs, and tRNAs when they are encoded in the rRNA operon. Processes pre-crRNA and tracrRNA of type II CRISPR loci if present in the organism. The protein is Ribonuclease 3 (rnc) of Pantoea ananatis (strain LMG 20103).